Consider the following 706-residue polypeptide: Drebrin (706 aa).

At A2 the chain carries N-acetylalanine. An ADF-H domain is found at 3 to 134 (GVSFSGHRLE…DAGAIGQRLS (132 aa)). Residues S141 and S142 each carry the phosphoserine modification. Residues 209–236 (ERMEQERQEQEERERRYREREQQIEEHR) are compositionally biased toward basic and acidic residues. Positions 209 to 497 (ERMEQERQEQ…AEPAASVTSV (289 aa)) are disordered. The residue at position 241 (S241) is a Phosphoserine. The span at 288-298 (DNPREFFRQQE) shows a compositional bias: basic and acidic residues. Residues 331–345 (SDSGPSSSSSSSSSP) show a composition bias toward low complexity. S344 is modified (phosphoserine). Residues 357 to 366 (RTPNLSSSLP) show a composition bias toward polar residues. A phosphothreonine mark is found at T379 and T383. Polar residues predominate over residues 382–396 (PTRSPSDSSTASTPI). 3 positions are modified to phosphoserine: S385, S387, and S393. The residue at position 394 (T394) is a Phosphothreonine. Positions 411–422 (QPPPPPPPPPPT) are enriched in pro residues. The segment covering 453-497 (AAEPPQAQEPPLLQSSPLEDSMCTESPEQAALAAPAEPAASVTSV) has biased composition (low complexity). S468 is modified (phosphoserine). T550 carries the post-translational modification Phosphothreonine. The interval 633 to 677 (EPHLLTNGETTQKEGTQASEGYFSQSQEEEFAQSEEPCAKVPPPV) is disordered. Over residues 639-651 (NGETTQKEGTQAS) the composition is skewed to polar residues. Residue S658 is modified to Phosphoserine.

Interacts with RUFY3. Interacts with CXCR4; this interaction is enhanced by antigenic stimulation. Interacts (via ADF-H domain) with ZMYND8 (via N-terminus); the interaction leads to sequestering of ZMYND8 in the cytoplasm. In terms of tissue distribution, expressed in the hippocampus, with expression in the pyramidal cells of CA1, CA2 and CA3 and in the granule cells of the dentate gyrus (at protein level). Highly expressed in brain, also present in stomach and to a lesser degree in kidney, colon, and urinary bladder. The E2 isoform is specifically expressed in adult stomach, kidney, and cultured cells.

The protein localises to the cytoplasm. It is found in the cell projection. Its subcellular location is the dendrite. The protein resides in the cell cortex. It localises to the cell junction. The protein localises to the growth cone. Its function is as follows. Actin cytoskeleton-organizing protein that plays a role in the formation of cell projections. Required for actin polymerization at immunological synapses (IS) and for the recruitment of the chemokine receptor CXCR4 to IS. Plays a role in dendritic spine morphogenesis and organization, including the localization of the dopamine receptor DRD1 to the dendritic spines. Involved in memory-related synaptic plasticity in the hippocampus. The sequence is that of Drebrin (Dbn1) from Mus musculus (Mouse).